The primary structure comprises 927 residues: Bifunctional glutamine synthetase adenylyltransferase/adenylyl-removing enzyme (927 aa).

The segment at 1–428 (MTMTDASDLL…AQFDQVFADK (428 aa)) is adenylyl removase. The adenylyl transferase stretch occupies residues 438–927 (DQAAGCIWSG…AALWARVFGA (490 aa)).

Belongs to the GlnE family. Mg(2+) serves as cofactor.

The enzyme catalyses [glutamine synthetase]-O(4)-(5'-adenylyl)-L-tyrosine + phosphate = [glutamine synthetase]-L-tyrosine + ADP. It catalyses the reaction [glutamine synthetase]-L-tyrosine + ATP = [glutamine synthetase]-O(4)-(5'-adenylyl)-L-tyrosine + diphosphate. Involved in the regulation of glutamine synthetase GlnA, a key enzyme in the process to assimilate ammonia. When cellular nitrogen levels are high, the C-terminal adenylyl transferase (AT) inactivates GlnA by covalent transfer of an adenylyl group from ATP to specific tyrosine residue of GlnA, thus reducing its activity. Conversely, when nitrogen levels are low, the N-terminal adenylyl removase (AR) activates GlnA by removing the adenylyl group by phosphorolysis, increasing its activity. The regulatory region of GlnE binds the signal transduction protein PII (GlnB) which indicates the nitrogen status of the cell. This chain is Bifunctional glutamine synthetase adenylyltransferase/adenylyl-removing enzyme, found in Burkholderia pseudomallei (strain K96243).